The following is a 174-amino-acid chain: Crossover junction endodeoxyribonuclease RuvC (174 aa).

Residues D8, E67, and D139 contribute to the active site. Mg(2+)-binding residues include D8, E67, and D139.

It belongs to the RuvC family. Homodimer which binds Holliday junction (HJ) DNA. The HJ becomes 2-fold symmetrical on binding to RuvC with unstacked arms; it has a different conformation from HJ DNA in complex with RuvA. In the full resolvosome a probable DNA-RuvA(4)-RuvB(12)-RuvC(2) complex forms which resolves the HJ. The cofactor is Mg(2+).

The protein resides in the cytoplasm. The catalysed reaction is Endonucleolytic cleavage at a junction such as a reciprocal single-stranded crossover between two homologous DNA duplexes (Holliday junction).. Its function is as follows. The RuvA-RuvB-RuvC complex processes Holliday junction (HJ) DNA during genetic recombination and DNA repair. Endonuclease that resolves HJ intermediates. Cleaves cruciform DNA by making single-stranded nicks across the HJ at symmetrical positions within the homologous arms, yielding a 5'-phosphate and a 3'-hydroxyl group; requires a central core of homology in the junction. The consensus cleavage sequence is 5'-(A/T)TT(C/G)-3'. Cleavage occurs on the 3'-side of the TT dinucleotide at the point of strand exchange. HJ branch migration catalyzed by RuvA-RuvB allows RuvC to scan DNA until it finds its consensus sequence, where it cleaves and resolves the cruciform DNA. This Stutzerimonas stutzeri (strain A1501) (Pseudomonas stutzeri) protein is Crossover junction endodeoxyribonuclease RuvC.